The primary structure comprises 986 residues: Ephrin type-A receptor 4 (986 aa).

The signal sequence occupies residues 1–19; it reads MAGIFYFILFSFLFGICDA. Over 20 to 547 the chain is Extracellular; the sequence is VTGSRVYPAN…RIIGDGANST (528 aa). The 180-residue stretch at 30–209 folds into the Eph LBD domain; the sequence is EVTLLDSRSV…FYKKCPLTVR (180 aa). N-linked (GlcNAc...) asparagine glycans are attached at residues N235, N340, and N408. 2 Fibronectin type-III domains span residues 328–439 and 440–537; these read PPSA…TNQA and APSS…TVPS. The chain crosses the membrane as a helical span at residues 548 to 569; sequence VLLVSVSGSVVLVVILIAAFVI. At 570-986 the chain is on the cytoplasmic side; that stretch reads SRRRSKYSKA…QQMHGRMVPV (417 aa). Phosphotyrosine; by autocatalysis is present on residues Y596 and Y602. The Protein kinase domain maps to 621 to 882; it reads IKIEKVIGVG…QIVNMLDKLI (262 aa). Residues 627–635 and K653 each bind ATP; that span reads IGVGEFGEV. D746 (proton acceptor) is an active-site residue. Phosphotyrosine; by autocatalysis occurs at positions 779 and 928. Residues 911–975 enclose the SAM domain; it reads SAVVSVGDWL…LSSVQAMRTQ (65 aa). The short motif at 984–986 is the PDZ-binding element; that stretch reads VPV.

This sequence belongs to the protein kinase superfamily. Tyr protein kinase family. Ephrin receptor subfamily. In terms of assembly, heterotetramer upon binding of the ligand. The heterotetramer is composed of an ephrin dimer and a receptor dimer. Oligomerization is probably required to induce biological responses. Interacts (phosphorylated at position Tyr-602) with FYN. Interacts (via PDZ motif) with SIPA1L1 (via PDZ domain); controls neuronal morphology through regulation of the RAP1 (RAP1A or RAP1B) and RAP2 (RAP2A, RAP2B or RAP2C) GTPases. Interacts with CDK5, CDK5R1 and NGEF; upon activation by EFNA1 induces NGEF phosphorylation by the kinase CDK5. Interacts with CHN1; effector of EPHA4 in axon guidance linking EPHA4 activation to RAC1 regulation. Forms a ternary complex composed of ADAM10, CADH1 and EPHA4; within the complex, CADH1 is cleaved by ADAM10 which disrupts adherens junctions. Expressed in inner and outer pillar cells of the organ of Corti (at protein level). Highest expression in the adult brain and retina and also detectable in kidney, lung, skeletal muscle and thymus. Not detected in heart and liver. Expressed in myogenic progenitor cells.

Its subcellular location is the cell membrane. It is found in the cell projection. It localises to the axon. The protein localises to the dendrite. The protein resides in the postsynaptic density membrane. Its subcellular location is the early endosome. It is found in the cell junction. It localises to the adherens junction. The enzyme catalyses L-tyrosyl-[protein] + ATP = O-phospho-L-tyrosyl-[protein] + ADP + H(+). Its function is as follows. Receptor tyrosine kinase which binds membrane-bound ephrin family ligands residing on adjacent cells, leading to contact-dependent bidirectional signaling into neighboring cells. The signaling pathway downstream of the receptor is referred to as forward signaling while the signaling pathway downstream of the ephrin ligand is referred to as reverse signaling. Highly promiscuous, it has the unique property among Eph receptors to bind and to be physiologically activated by both GPI-anchored ephrin-A and transmembrane ephrin-B ligands including EFNA1 and EFNB3. Upon activation by ephrin ligands, modulates cell morphology and integrin-dependent cell adhesion through regulation of the Rac, Rap and Rho GTPases activity. Plays an important role in the development of the nervous system controlling different steps of axonal guidance including the establishment of the corticospinal projections. May also control the segregation of motor and sensory axons during neuromuscular circuit developmen. In addition to its role in axonal guidance plays a role in synaptic plasticity. Activated by EFNA1 phosphorylates CDK5 at 'Tyr-15' which in turn phosphorylates NGEF regulating RHOA and dendritic spine morphogenesis. In the nervous system, also plays a role in repair after injury preventing axonal regeneration and in angiogenesis playing a role in central nervous system vascular formation. Additionally, its promiscuity makes it available to participate in a variety of cell-cell signaling regulating for instance the development of the thymic epithelium. During development of the cochlear organ of Corti, regulates pillar cell separation by forming a ternary complex with ADAM10 and CADH1 which facilitates the cleavage of CADH1 by ADAM10 and disruption of adherens junctions. Phosphorylates CAPRIN1, promoting CAPRIN1-dependent formation of a membraneless compartment. The sequence is that of Ephrin type-A receptor 4 (Epha4) from Mus musculus (Mouse).